Reading from the N-terminus, the 289-residue chain is Probable prolyl 4-hydroxylase 10 (289 aa).

The helical; Signal-anchor for type II membrane protein transmembrane segment at 20 to 40 (LVFAVLIMSTFVILILLAFGI) threads the bilayer. Over 41 to 289 (LSVPSNNAGS…KWLRVHEYKV (249 aa)) the chain is Lumenal. The region spanning 161-284 (HGEGLQVLHY…KWSSTKWLRV (124 aa)) is the Fe2OG dioxygenase domain. 2 residues coordinate Fe cation: His179 and Asp181. Asn220 carries N-linked (GlcNAc...) asparagine glycosylation. His265 is a binding site for Fe cation. Residue Lys275 coordinates 2-oxoglutarate.

This sequence belongs to the P4HA family. It depends on Fe(2+) as a cofactor. Requires L-ascorbate as cofactor.

The protein resides in the endoplasmic reticulum membrane. The enzyme catalyses L-prolyl-[collagen] + 2-oxoglutarate + O2 = trans-4-hydroxy-L-prolyl-[collagen] + succinate + CO2. Functionally, catalyzes the post-translational formation of 4-hydroxyproline in -Xaa-Pro-Gly- sequences in proline-rich peptide sequences of plant glycoproteins and other proteins. Hydroxyprolines are important constituent of many plant cell wall glycoproteins such as extensins, hydroxyproline-rich glycoproteins, lectins and arabinogalactan proteins. This is Probable prolyl 4-hydroxylase 10 from Arabidopsis thaliana (Mouse-ear cress).